Consider the following 344-residue polypeptide: Phenylalanine--tRNA ligase alpha subunit (344 aa).

Glu256 is a Mg(2+) binding site.

The protein belongs to the class-II aminoacyl-tRNA synthetase family. Phe-tRNA synthetase alpha subunit type 1 subfamily. Tetramer of two alpha and two beta subunits. Requires Mg(2+) as cofactor.

It localises to the cytoplasm. The enzyme catalyses tRNA(Phe) + L-phenylalanine + ATP = L-phenylalanyl-tRNA(Phe) + AMP + diphosphate + H(+). The polypeptide is Phenylalanine--tRNA ligase alpha subunit (Geobacillus thermodenitrificans (strain NG80-2)).